The sequence spans 557 residues: Estrogen receptor beta (557 aa).

The modulating stretch occupies residues 1–154 (MMAAASSPEK…SSGGKADLHY (154 aa)). 2 NR C4-type zinc fingers span residues 155 to 175 (CAVC…CEGC) and 191 to 215 (CPAT…LRKC). The segment at residues 155–220 (CAVCHDYASG…RLRKCYEVGM (66 aa)) is a DNA-binding region (nuclear receptor). The interval 240-268 (LTRLSSQGKTAEPKGITGPAEGSLNKPEK) is disordered. Residues 272–508 (TPEQLIERIL…DLLLEMLDAH (237 aa)) enclose the NR LBD domain. The tract at residues 513–557 (SCLPHQPPQQDSKDQSEVPAPLHSSAGGPSNTWTPSSARAGGESQ) is disordered. Positions 539–557 (GGPSNTWTPSSARAGGESQ) are enriched in polar residues.

The protein belongs to the nuclear hormone receptor family. NR3 subfamily. As to quaternary structure, binds DNA as a homodimer. Can form a heterodimer with ER-alpha.

The protein resides in the nucleus. Its function is as follows. Binds estrogens with an affinity similar to that of ER-alpha, and activates expression of reporter genes containing estrogen response elements (ERE) in an estrogen-dependent manner. The sequence is that of Estrogen receptor beta (esr2) from Oreochromis niloticus (Nile tilapia).